The following is a 1054-amino-acid chain: MTEAVGGVYPLVDMTGGSSRFPEMEENVLDFWKRDDTFQASIDQRNDAEDYVFYDGPPFANGLPHYGHLLTGYVKDIVPRYQTMRGYRVPRVFGWDTHGLPAELEAEKQLGIKDKGEIESMGLAQFNDYCAKSVLQYTKEWEEYVTRQARWVDFENGYKTMDLTYMESVIWAFKELYDKGLIYQGFRVLPYSWAEHTPLSNQETRLDDSYKMRQDPTLTVTMPITGKIEGTGANEALIGANAIAWTTTPWTLPSNLALAVNPSVTYALVEVAGDGEEGFVGQQLLLARDLVGAYAKELGTDARIISEHPGTELIGLTYEPVFDFFRDHPNAFQILGADYVTTEDGTGIVHQAPAFGEDDMNVCNAADIAPVIPVDMDGKFTSLTPEYEGQLVFDANKDIIRDLKAKGRVFRHQTIEHSYPHSWRSGEPLIYMALPSWFVNVTKIRDRMVETNQDIEWMPAHIRDGQFGKWLEGARDWNISRSRYWGSPIPVWVSDDENYPRVDVYGSLDELEADFGVRPTSLHRPYIDELTRPNPDDPTGKSTMRRVPDVLDVWFDSGSMPFAQVHYPFENKDWFDTHAPADFIVEYIGQTRGWFYLLHVLSVGLFDRPAFKKVVAHGIVLGDDGLKMSKSKGNYPNVTEVFDRDGSDAMRWFLMSSPILRGGNLIVTEKGIREGVRQAQLPMWNAYSFLQLYASKKATWSVDSTDVLDRYILAKLHDLVADVTAALDATDIARACDQVRWFCDALTNWYVRRSRDRFWAGDEAHPEAFNTLYTVLETLTRVAAPLLPMTTEVIWRGLTGERSVHLTDFPSADSFPADADLVRTMDEIRGVCSAASSIRKAHKLRNRLPLPNLTVALPDSGRLADFLSIIRDEVNVKNVDLTSDVDAVGTFEVVVNAKVAGPRLGKDVQRVIKAVKAGNYERVGETVVADGIELQDGEYTERLVAANPDSTAQIDDVDGLVVLDMEVTPELEAEGWAADVIRGLQDARKSSGFEVSDRIQVTLSVPGDKQEWATRHADHIAGEVLATSFEVTQDDLGEDAHEVLKGVTASVARV.

The short motif at 58–68 (PFANGLPHYGH) is the 'HIGH' region element. Positions 627-631 (KMSKS) match the 'KMSKS' region motif. Lys-630 is a binding site for ATP.

This sequence belongs to the class-I aminoacyl-tRNA synthetase family. IleS type 2 subfamily. As to quaternary structure, monomer. It depends on Zn(2+) as a cofactor.

The protein localises to the cytoplasm. The enzyme catalyses tRNA(Ile) + L-isoleucine + ATP = L-isoleucyl-tRNA(Ile) + AMP + diphosphate. Catalyzes the attachment of isoleucine to tRNA(Ile). As IleRS can inadvertently accommodate and process structurally similar amino acids such as valine, to avoid such errors it has two additional distinct tRNA(Ile)-dependent editing activities. One activity is designated as 'pretransfer' editing and involves the hydrolysis of activated Val-AMP. The other activity is designated 'posttransfer' editing and involves deacylation of mischarged Val-tRNA(Ile). This chain is Isoleucine--tRNA ligase, found in Corynebacterium efficiens (strain DSM 44549 / YS-314 / AJ 12310 / JCM 11189 / NBRC 100395).